The chain runs to 308 residues: D-alanine--D-alanine ligase (308 aa).

One can recognise an ATP-grasp domain in the interval 103–302 (KTVMATAGVP…FDELVQWMVE (200 aa)). 130-184 (MAPPYVIKPVADGSSVGVFIVTEDQAHPPQELFRDDWPHGEELLVEKYIAGRELT) is a binding site for ATP. Mg(2+) is bound by residues Asp252, Glu269, and Asn271.

It belongs to the D-alanine--D-alanine ligase family. The cofactor is Mg(2+). Mn(2+) is required as a cofactor.

Its subcellular location is the cytoplasm. It catalyses the reaction 2 D-alanine + ATP = D-alanyl-D-alanine + ADP + phosphate + H(+). It functions in the pathway cell wall biogenesis; peptidoglycan biosynthesis. Functionally, cell wall formation. This is D-alanine--D-alanine ligase from Afipia carboxidovorans (strain ATCC 49405 / DSM 1227 / KCTC 32145 / OM5) (Oligotropha carboxidovorans).